Consider the following 616-residue polypeptide: Dihydroxy-acid dehydratase (616 aa).

D81 lines the Mg(2+) pocket. C122 is a [2Fe-2S] cluster binding site. 2 residues coordinate Mg(2+): D123 and K124. Position 124 is an N6-carboxylysine (K124). C195 is a binding site for [2Fe-2S] cluster. E491 serves as a coordination point for Mg(2+). S517 functions as the Proton acceptor in the catalytic mechanism.

The protein belongs to the IlvD/Edd family. As to quaternary structure, homodimer. [2Fe-2S] cluster serves as cofactor. The cofactor is Mg(2+).

The catalysed reaction is (2R)-2,3-dihydroxy-3-methylbutanoate = 3-methyl-2-oxobutanoate + H2O. The enzyme catalyses (2R,3R)-2,3-dihydroxy-3-methylpentanoate = (S)-3-methyl-2-oxopentanoate + H2O. The protein operates within amino-acid biosynthesis; L-isoleucine biosynthesis; L-isoleucine from 2-oxobutanoate: step 3/4. Its pathway is amino-acid biosynthesis; L-valine biosynthesis; L-valine from pyruvate: step 3/4. Its function is as follows. Functions in the biosynthesis of branched-chain amino acids. Catalyzes the dehydration of (2R,3R)-2,3-dihydroxy-3-methylpentanoate (2,3-dihydroxy-3-methylvalerate) into 2-oxo-3-methylpentanoate (2-oxo-3-methylvalerate) and of (2R)-2,3-dihydroxy-3-methylbutanoate (2,3-dihydroxyisovalerate) into 2-oxo-3-methylbutanoate (2-oxoisovalerate), the penultimate precursor to L-isoleucine and L-valine, respectively. This chain is Dihydroxy-acid dehydratase, found in Yersinia pseudotuberculosis serotype I (strain IP32953).